The primary structure comprises 607 residues: Elongation factor 4 (607 aa).

The 183-residue stretch at 11 to 193 folds into the tr-type G domain; sequence ENIRNFSIIA…KIVEVVPPPE (183 aa). Residues 23-28 and 140-143 contribute to the GTP site; these read DHGKST and NKID.

It belongs to the TRAFAC class translation factor GTPase superfamily. Classic translation factor GTPase family. LepA subfamily.

It is found in the cell membrane. It carries out the reaction GTP + H2O = GDP + phosphate + H(+). In terms of biological role, required for accurate and efficient protein synthesis under certain stress conditions. May act as a fidelity factor of the translation reaction, by catalyzing a one-codon backward translocation of tRNAs on improperly translocated ribosomes. Back-translocation proceeds from a post-translocation (POST) complex to a pre-translocation (PRE) complex, thus giving elongation factor G a second chance to translocate the tRNAs correctly. Binds to ribosomes in a GTP-dependent manner. The polypeptide is Elongation factor 4 (Staphylococcus haemolyticus (strain JCSC1435)).